Consider the following 63-residue polypeptide: Large ribosomal subunit protein uL29 (63 aa).

It belongs to the universal ribosomal protein uL29 family.

This chain is Large ribosomal subunit protein uL29, found in Bordetella petrii (strain ATCC BAA-461 / DSM 12804 / CCUG 43448).